A 355-amino-acid polypeptide reads, in one-letter code: NADH dehydrogenase [ubiquinone] 1 alpha subcomplex subunit 10, mitochondrial (355 aa).

The N-terminal 35 residues, 1–35 (MALRLLKLAATSASARVVAAGAQRVRGIHSSVQCK), are a transit peptide targeting the mitochondrion. Serine 250 carries the phosphoserine; by PINK1 modification. Lysine 285 bears the N6-succinyllysine mark.

Belongs to the complex I NDUFA10 subunit family. As to quaternary structure, complex I is composed of 45 different subunits. This a component of the hydrophobic protein fraction. Requires FAD as cofactor. In terms of processing, phosphorylation at Ser-250 by PINK1 is required for the binding and/or reduction of the complex I substrate ubiquinone.

Its subcellular location is the mitochondrion matrix. Functionally, accessory subunit of the mitochondrial membrane respiratory chain NADH dehydrogenase (Complex I), that is believed not to be involved in catalysis. Complex I functions in the transfer of electrons from NADH to the respiratory chain. The immediate electron acceptor for the enzyme is believed to be ubiquinone. The polypeptide is NADH dehydrogenase [ubiquinone] 1 alpha subcomplex subunit 10, mitochondrial (NDUFA10) (Homo sapiens (Human)).